The following is a 666-amino-acid chain: Probable potassium transport system protein Kup (666 aa).

Helical transmembrane passes span 16-36 (GFII…LYTM), 58-78 (ISLI…LIAL), 100-120 (PWLI…GALT), 141-161 (IYQN…VLFG), 165-185 (FGTG…FSFL), 221-241 (IFIL…YSDL), 253-273 (WPFV…WILA), 294-314 (VYLV…LISG), 343-363 (LYIP…VLYF), 373-393 (YGLA…YYLI), 399-419 (PFLA…FFWA), and 424-444 (FMHG…VMFI).

Belongs to the HAK/KUP transporter (TC 2.A.72) family.

It is found in the cell membrane. It catalyses the reaction K(+)(in) + H(+)(in) = K(+)(out) + H(+)(out). Functionally, transport of potassium into the cell. Likely operates as a K(+):H(+) symporter. The polypeptide is Probable potassium transport system protein Kup (Streptococcus pyogenes serotype M6 (strain ATCC BAA-946 / MGAS10394)).